Consider the following 148-residue polypeptide: Lysozyme C, milk isozyme (148 aa).

The signal sequence occupies residues 1–18 (MKALLIVGLLLLSVAVQG). In terms of domain architecture, C-type lysozyme spans 19-148 (KKFQRCELAR…LRSYVQGCRV (130 aa)). 4 disulfide bridges follow: Cys24-Cys146, Cys48-Cys134, Cys83-Cys99, and Cys95-Cys113. Active-site residues include Glu53 and Asp71.

It belongs to the glycosyl hydrolase 22 family.

The enzyme catalyses Hydrolysis of (1-&gt;4)-beta-linkages between N-acetylmuramic acid and N-acetyl-D-glucosamine residues in a peptidoglycan and between N-acetyl-D-glucosamine residues in chitodextrins.. Functionally, lysozymes have primarily a bacteriolytic function; those in tissues and body fluids are associated with the monocyte-macrophage system and enhance the activity of immunoagents. The protein is Lysozyme C, milk isozyme of Bos taurus (Bovine).